The sequence spans 369 residues: L-lactate oxidase (369 aa).

Residues 13-369 (EKKLNVLNLD…KNAKLLNIRY (357 aa)) form the FMN hydroxy acid dehydrogenase domain. Residue tyrosine 39 coordinates pyruvate. FMN contacts are provided by residues 92–94 (PAA), serine 121, and glutamine 143. Pyruvate is bound at residue tyrosine 145. Residue threonine 171 coordinates FMN. Arginine 180 is a binding site for pyruvate. The FMN site is built by lysine 240 and serine 262. The pyruvate site is built by histidine 264 and arginine 267. The active-site Proton acceptor is histidine 264. FMN is bound by residues 295-299 (DSGIR) and arginine 319.

Belongs to the FMN-dependent alpha-hydroxy acid dehydrogenase family. As to quaternary structure, homotetramer. Requires FMN as cofactor.

It catalyses the reaction (S)-lactate + O2 = pyruvate + H2O2. Functionally, catalyzes the oxidation of (S)-lactate (L-lactate) to pyruvate, with a reduction of O2 to H2O2. May be involved in the utilization of L-lactate as an energy source for growth. This is L-lactate oxidase from Lentilactobacillus hilgardii (strain ATCC 8290 / DSM 20176 / CCUG 30140 / JCM 1155 / KCTC 3500 / NBRC 15886 / NCIMB 8040 / NRRL B-1843 / 9).